Reading from the N-terminus, the 34-residue chain is Photosystem II reaction center protein M (34 aa).

Residues 5-25 (ILAFIATALFILVPTAFLLII) traverse the membrane as a helical segment.

It belongs to the PsbM family. In terms of assembly, PSII is composed of 1 copy each of membrane proteins PsbA, PsbB, PsbC, PsbD, PsbE, PsbF, PsbH, PsbI, PsbJ, PsbK, PsbL, PsbM, PsbT, PsbX, PsbY, PsbZ, Psb30/Ycf12, at least 3 peripheral proteins of the oxygen-evolving complex and a large number of cofactors. It forms dimeric complexes.

The protein localises to the plastid. Its subcellular location is the chloroplast thylakoid membrane. Its function is as follows. One of the components of the core complex of photosystem II (PSII). PSII is a light-driven water:plastoquinone oxidoreductase that uses light energy to abstract electrons from H(2)O, generating O(2) and a proton gradient subsequently used for ATP formation. It consists of a core antenna complex that captures photons, and an electron transfer chain that converts photonic excitation into a charge separation. This subunit is found at the monomer-monomer interface. This is Photosystem II reaction center protein M from Coffea arabica (Arabian coffee).